The following is a 759-amino-acid chain: 1,4-alpha-glucan branching enzyme GlgB (759 aa).

Asp431 (nucleophile) is an active-site residue. Residue Glu484 is the Proton donor of the active site.

Belongs to the glycosyl hydrolase 13 family. GlgB subfamily. In terms of assembly, monomer.

The catalysed reaction is Transfers a segment of a (1-&gt;4)-alpha-D-glucan chain to a primary hydroxy group in a similar glucan chain.. The protein operates within glycan biosynthesis; glycogen biosynthesis. Functionally, catalyzes the formation of the alpha-1,6-glucosidic linkages in glycogen by scission of a 1,4-alpha-linked oligosaccharide from growing alpha-1,4-glucan chains and the subsequent attachment of the oligosaccharide to the alpha-1,6 position. The sequence is that of 1,4-alpha-glucan branching enzyme GlgB from Prochlorococcus marinus (strain MIT 9211).